Here is a 251-residue protein sequence, read N- to C-terminus: 5'-nucleotidase SurE (251 aa).

Residues Asp8, Asp9, Ser39, and Asn91 each coordinate a divalent metal cation.

The protein belongs to the SurE nucleotidase family. The cofactor is a divalent metal cation.

The protein localises to the cytoplasm. The catalysed reaction is a ribonucleoside 5'-phosphate + H2O = a ribonucleoside + phosphate. Nucleotidase that shows phosphatase activity on nucleoside 5'-monophosphates. In Halorhodospira halophila (strain DSM 244 / SL1) (Ectothiorhodospira halophila (strain DSM 244 / SL1)), this protein is 5'-nucleotidase SurE.